The sequence spans 380 residues: 3-isopropylmalate dehydrogenase (380 aa).

NAD(+) is bound at residue 79–90 (GPEWAGVHPTPE). Residues Arg97, Arg107, Arg136, and Asp229 each contribute to the substrate site. Mg(2+)-binding residues include Asp229, Asp254, and Asp258. Position 294 to 306 (294 to 306 (GSAPDISGKGLAN)) interacts with NAD(+).

It belongs to the isocitrate and isopropylmalate dehydrogenases family. Homodimer. Requires Mg(2+) as cofactor. It depends on Mn(2+) as a cofactor.

Its subcellular location is the cytoplasm. The catalysed reaction is (2R,3S)-3-isopropylmalate + NAD(+) = 4-methyl-2-oxopentanoate + CO2 + NADH. Its pathway is amino-acid biosynthesis; L-leucine biosynthesis; L-leucine from 3-methyl-2-oxobutanoate: step 3/4. In terms of biological role, catalyzes the oxidation of 3-carboxy-2-hydroxy-4-methylpentanoate (3-isopropylmalate) to 3-carboxy-4-methyl-2-oxopentanoate. The product decarboxylates to 4-methyl-2 oxopentanoate. The polypeptide is 3-isopropylmalate dehydrogenase (LEU2) (Hapsidospora chrysogena (Acremonium chrysogenum)).